A 25-amino-acid polypeptide reads, in one-letter code: Aurein-5.2 (25 aa).

In terms of tissue distribution, expressed by the skin dorsal glands.

It is found in the secreted. Its function is as follows. Has antimicrobial activity against L.lactis and S.uberis. This is Aurein-5.2 from Ranoidea raniformis (Southern bell frog).